Here is a 240-residue protein sequence, read N- to C-terminus: DNA repair protein RecO (240 aa).

Belongs to the RecO family.

Involved in DNA repair and RecF pathway recombination. In Xanthomonas oryzae pv. oryzae (strain MAFF 311018), this protein is DNA repair protein RecO.